The following is an 876-amino-acid chain: Radial spoke head 10 homolog B (876 aa).

2 stretches are compositionally biased toward basic and acidic residues: residues Met1–Ala16 and Pro57–Gln66. The segment at Met1–Gln72 is disordered. 10 MORN repeats span residues Tyr86 to Thr108, Tyr109 to Lys131, Tyr132 to Thr154, Tyr155 to Val177, Tyr179 to Thr201, Tyr204 to Ile226, Tyr227 to Glu249, Tyr251 to Ile273, Tyr284 to Met306, and Tyr307 to Val329. Disordered stretches follow at residues Ser360–Ser386 and Glu841–Lys876. Over residues Ala373 to Ser386 the composition is skewed to basic and acidic residues. Positions Glu752 to Glu841 form a coiled coil.

Interacts with RSPH6A. Does not appear to be part of the axonemal radial spoke complexes 1 or 2.

The protein resides in the cytoplasm. Its subcellular location is the cytoskeleton. The protein localises to the cilium axoneme. It is found in the cell projection. It localises to the cilium. The protein resides in the flagellum. Functionally, may function as part of the axonemal radial spoke complex 3 (RS3). Radial spoke complexes are important for ciliary motility. The protein is Radial spoke head 10 homolog B (Rsph10b) of Rattus norvegicus (Rat).